We begin with the raw amino-acid sequence, 509 residues long: Ethanolamine-phosphate phospho-lyase (509 aa).

Lysine 279 carries the N6-(pyridoxal phosphate)lysine modification. Residues 451–474 (EKTSAKRKVHNENSGDTNAKEKET) are compositionally biased toward basic and acidic residues. The segment at 451–509 (EKTSAKRKVHNENSGDTNAKEKETCSSNSQERNPNDHAYRQSNGLHPESPTFTRKRIRT) is disordered.

Belongs to the class-III pyridoxal-phosphate-dependent aminotransferase family. In terms of assembly, homotetramer. Requires pyridoxal 5'-phosphate as cofactor.

It localises to the mitochondrion. It catalyses the reaction phosphoethanolamine + H2O = acetaldehyde + NH4(+) + phosphate. In terms of biological role, catalyzes the pyridoxal-phosphate-dependent breakdown of phosphoethanolamine, converting it to ammonia, inorganic phosphate and acetaldehyde. The protein is Ethanolamine-phosphate phospho-lyase (etnppl) of Xenopus laevis (African clawed frog).